The following is an 85-amino-acid chain: uncharacterized protein (85 aa).

The disordered stretch occupies residues 35 to 85 (SDKDAPFSTQALTRSKSKRKRSALPVANGLKKPTRSIKRPSRGERLSATTI).

This is an uncharacterized protein from Pasteurella multocida (strain Pm70).